A 369-amino-acid polypeptide reads, in one-letter code: Superinfection exclusion protein (369 aa).

An N-terminal signal peptide occupies residues 1-15; the sequence is MIALLILSLTCSVST.

It belongs to the serpin family. Orthopoxvirus OPG040 subfamily. In terms of assembly, interacts with OPG185/A56 protein.

Its subcellular location is the virion membrane. The protein localises to the host cell membrane. Negatively regulates superinfection and syncytium formation in infected host cells. Acts in concert with OPG185/A56 protein at the host cell membrane by interacting with and inhibiting the mature virion entry/fusion complex (EFC). This mechanism ensures that new virions released from the cell cannot enter already infected cells. This is Superinfection exclusion protein (OPG040) from Vaccinia virus (strain Western Reserve) (VACV).